Here is a 204-residue protein sequence, read N- to C-terminus: WW domain-containing protein C11B10.08 (204 aa).

In terms of domain architecture, WW spans 7–43; it reads EGLPNGWVAQWDERYKCYFYVNESDPKAKPQWECPVR. Positions 32-117 are disordered; sequence PKAKPQWECP…GYPQQPYYYP (86 aa). Composition is skewed to low complexity over residues 66-100 and 108-117; these read YSNS…GAAP and GYPQQPYYYP.

It is found in the cytoplasm. Its subcellular location is the nucleus. This is WW domain-containing protein C11B10.08 from Schizosaccharomyces pombe (strain 972 / ATCC 24843) (Fission yeast).